A 444-amino-acid chain; its full sequence is S-locus-specific glycoprotein (444 aa).

Positions 1–28 are cleaved as a signal peptide; sequence MRGVIPNYHHSYTLFFFVILVLFPHVFS. One can recognise a Bulb-type lectin domain in the interval 31-159; that stretch reads TLSPNEALTI…KTNDLDRFMW (129 aa). N-linked (GlcNAc...) asparagine glycosylation is found at asparagine 43, asparagine 125, asparagine 243, and asparagine 396. The PAN domain maps to 356-437; it reads CGEGDGFLRM…GGQDLYVKVA (82 aa). Cystine bridges form between cysteine 387-cysteine 412 and cysteine 395-cysteine 397.

Stigma.

Involved in sporophytic self-incompatibility system (the inability of flowering plants to achieve self-fertilization). The protein is S-locus-specific glycoprotein (SLSG) of Brassica oleracea var. alboglabra (Chinese kale).